We begin with the raw amino-acid sequence, 243 residues long: Geranylgeranylglyceryl phosphate synthase (243 aa).

2 residues coordinate Mg(2+): D22 and S51. Residues 170–176 (YLESGSG), 201–202 (GG), and 223–224 (GT) each bind sn-glycerol 1-phosphate.

The protein belongs to the GGGP/HepGP synthase family. Group II subfamily. The cofactor is Mg(2+).

The protein localises to the cytoplasm. The enzyme catalyses sn-glycerol 1-phosphate + (2E,6E,10E)-geranylgeranyl diphosphate = sn-3-O-(geranylgeranyl)glycerol 1-phosphate + diphosphate. The protein operates within membrane lipid metabolism; glycerophospholipid metabolism. Prenyltransferase that catalyzes the transfer of the geranylgeranyl moiety of geranylgeranyl diphosphate (GGPP) to the C3 hydroxyl of sn-glycerol-1-phosphate (G1P). This reaction is the first ether-bond-formation step in the biosynthesis of archaeal membrane lipids. This chain is Geranylgeranylglyceryl phosphate synthase, found in Picrophilus torridus (strain ATCC 700027 / DSM 9790 / JCM 10055 / NBRC 100828 / KAW 2/3).